The chain runs to 630 residues: WD repeat-containing protein 26 homolog (630 aa).

Over residues 1–13 (MQSTSSTSSGSCS) the composition is skewed to low complexity. Residues 1–90 (MQSTSSTSSG…NNRENTSCSG (90 aa)) form a disordered region. Phosphoserine occurs at positions 36 and 40. Polar residues-rich tracts occupy residues 48 to 57 (PSGSSAATNG) and 66 to 75 (IVNNNGSSSR). In terms of domain architecture, LisH spans 96–128 (SNQEIIRLIGQYLHDVGLDKSVQTLMLESGCYL). The CTLH domain occupies 129-190 (EHPSATKFRE…EHLDDGNPLD (62 aa)). WD repeat units lie at residues 312–351 (DHCDEVWFCKFSPDGLKLATGSKDSTVIIWDVDPYKLTLK), 359–400 (QAQL…LVVK), 404–443 (SLEDSLACGAFSRDGARFVCGGQKGQLYLCDLNGTIVDSW), 445–482 (GVRVNSIAFRADNKTILAADNHYRIRGYNFDSPRSDFD), 485–524 (REPHPIMTFSINSADRLALLNVSNQGLHLWDIEDKCLVRR), 529–569 (RQSN…PLAK), and 572–612 (GHTK…SSAT). Residues 604 to 630 (PKPNGSSATTESDDCSSSSSSSSWNMT) are disordered. The segment covering 609 to 630 (SSATTESDDCSSSSSSSSWNMT) has biased composition (low complexity).

It localises to the cytoplasm. The protein localises to the mitochondrion. In terms of biological role, G-beta-like protein involved in cell signal transduction. This Drosophila melanogaster (Fruit fly) protein is WD repeat-containing protein 26 homolog.